We begin with the raw amino-acid sequence, 393 residues long: DNA primase small subunit PriS (393 aa).

Catalysis depends on residues Asp-100, Asp-102, and Asp-296.

The protein belongs to the eukaryotic-type primase small subunit family. In terms of assembly, heterodimer of a small subunit (PriS) and a large subunit (PriL). Requires Mg(2+) as cofactor. Mn(2+) serves as cofactor.

Functionally, catalytic subunit of DNA primase, an RNA polymerase that catalyzes the synthesis of short RNA molecules used as primers for DNA polymerase during DNA replication. The small subunit contains the primase catalytic core and has DNA synthesis activity on its own. Binding to the large subunit stabilizes and modulates the activity, increasing the rate of DNA synthesis while decreasing the length of the DNA fragments, and conferring RNA synthesis capability. The DNA polymerase activity may enable DNA primase to also catalyze primer extension after primer synthesis. May also play a role in DNA repair. The sequence is that of DNA primase small subunit PriS from Natronomonas pharaonis (strain ATCC 35678 / DSM 2160 / CIP 103997 / JCM 8858 / NBRC 14720 / NCIMB 2260 / Gabara) (Halobacterium pharaonis).